Here is a 58-residue protein sequence, read N- to C-terminus: Keratin-associated protein 19-6 (58 aa).

The protein belongs to the KRTAP type 19 family. Interacts with hair keratins.

In terms of biological role, in the hair cortex, hair keratin intermediate filaments are embedded in an interfilamentous matrix, consisting of hair keratin-associated proteins (KRTAP), which are essential for the formation of a rigid and resistant hair shaft through their extensive disulfide bond cross-linking with abundant cysteine residues of hair keratins. The matrix proteins include the high-sulfur and high-glycine-tyrosine keratins. This chain is Keratin-associated protein 19-6 (KRTAP19-6), found in Homo sapiens (Human).